We begin with the raw amino-acid sequence, 121 residues long: Small ribosomal subunit protein uS13 (121 aa).

The interval 88-121 (GMRHRRGLPTRGQNTKNNARTRKGPAKSIAGKKK) is disordered. The segment covering 106 to 121 (ARTRKGPAKSIAGKKK) has biased composition (basic residues).

This sequence belongs to the universal ribosomal protein uS13 family. In terms of assembly, part of the 30S ribosomal subunit. Forms a loose heterodimer with protein S19. Forms two bridges to the 50S subunit in the 70S ribosome.

Located at the top of the head of the 30S subunit, it contacts several helices of the 16S rRNA. In the 70S ribosome it contacts the 23S rRNA (bridge B1a) and protein L5 of the 50S subunit (bridge B1b), connecting the 2 subunits; these bridges are implicated in subunit movement. Contacts the tRNAs in the A and P-sites. This is Small ribosomal subunit protein uS13 from Lactococcus lactis subsp. cremoris (strain MG1363).